Reading from the N-terminus, the 266-residue chain is N-formylglutamate deformylase (266 aa).

Belongs to the N-formylglutamate deformylase family. As to quaternary structure, monomer.

The enzyme catalyses N-formyl-L-glutamate + H2O = formate + L-glutamate. Its pathway is amino-acid degradation; L-histidine degradation into L-glutamate; L-glutamate from N-formimidoyl-L-glutamate (deiminase route): step 2/2. In terms of biological role, catalyzes the hydrolysis of N-formyl-L-glutamate to formate and L-glutamate. Shows weak activity with N-formyl-L-glutamine. This Pseudomonas aeruginosa (strain ATCC 15692 / DSM 22644 / CIP 104116 / JCM 14847 / LMG 12228 / 1C / PRS 101 / PAO1) protein is N-formylglutamate deformylase.